The primary structure comprises 448 residues: Glucose-6-phosphate isomerase (448 aa).

The active-site Proton donor is E290. Residues H311 and K425 contribute to the active site.

This sequence belongs to the GPI family.

It is found in the cytoplasm. The enzyme catalyses alpha-D-glucose 6-phosphate = beta-D-fructose 6-phosphate. It participates in carbohydrate biosynthesis; gluconeogenesis. The protein operates within carbohydrate degradation; glycolysis; D-glyceraldehyde 3-phosphate and glycerone phosphate from D-glucose: step 2/4. Catalyzes the reversible isomerization of glucose-6-phosphate to fructose-6-phosphate. This Levilactobacillus brevis (strain ATCC 367 / BCRC 12310 / CIP 105137 / JCM 1170 / LMG 11437 / NCIMB 947 / NCTC 947) (Lactobacillus brevis) protein is Glucose-6-phosphate isomerase.